Consider the following 228-residue polypeptide: Uracil-DNA glycosylase (228 aa).

D65 (proton acceptor) is an active-site residue.

This sequence belongs to the uracil-DNA glycosylase (UDG) superfamily. UNG family.

It localises to the cytoplasm. It catalyses the reaction Hydrolyzes single-stranded DNA or mismatched double-stranded DNA and polynucleotides, releasing free uracil.. Excises uracil residues from the DNA which can arise as a result of misincorporation of dUMP residues by DNA polymerase or due to deamination of cytosine. This Lacticaseibacillus paracasei (strain ATCC 334 / BCRC 17002 / CCUG 31169 / CIP 107868 / KCTC 3260 / NRRL B-441) (Lactobacillus paracasei) protein is Uracil-DNA glycosylase.